Reading from the N-terminus, the 510-residue chain is ATP synthase subunit alpha (510 aa).

Residue 169-176 (GDRQTGKT) participates in ATP binding.

This sequence belongs to the ATPase alpha/beta chains family. In terms of assembly, F-type ATPases have 2 components, CF(1) - the catalytic core - and CF(0) - the membrane proton channel. CF(1) has five subunits: alpha(3), beta(3), gamma(1), delta(1), epsilon(1). CF(0) has four main subunits: a(1), b(1), b'(1) and c(9-12).

Its subcellular location is the cell inner membrane. It catalyses the reaction ATP + H2O + 4 H(+)(in) = ADP + phosphate + 5 H(+)(out). Functionally, produces ATP from ADP in the presence of a proton gradient across the membrane. The alpha chain is a regulatory subunit. The sequence is that of ATP synthase subunit alpha from Rhodospirillum rubrum (strain ATCC 11170 / ATH 1.1.1 / DSM 467 / LMG 4362 / NCIMB 8255 / S1).